The following is a 449-amino-acid chain: Adenylosuccinate synthetase isozyme 1 A (449 aa).

Over residues 1-10 the composition is skewed to polar residues; it reads MSHKSCYTNP. Residues 1-22 form a disordered region; it reads MSHKSCYTNPGTGGKRPRNDKG. Residues 34 to 40 and 62 to 64 each bind GTP; these read GDEGKGK and GHT. The Proton acceptor role is filled by Asp35. Mg(2+)-binding residues include Asp35 and Gly62. A substrate-binding site is contributed by Asp35. IMP is bound by residues 35–38, 60–63, Thr155, Arg169, Asn248, Thr263, and Arg327; these read DEGK and NAGH. His63 serves as the catalytic Proton donor. 323-329 provides a ligand contact to substrate; it reads VTTGRKR. Residues Arg329, 355–357, and 437–440 contribute to the GTP site; these read KLD and GVGK.

Belongs to the adenylosuccinate synthetase family. Homodimer. Mg(2+) is required as a cofactor.

It is found in the cytoplasm. The enzyme catalyses IMP + L-aspartate + GTP = N(6)-(1,2-dicarboxyethyl)-AMP + GDP + phosphate + 2 H(+). It functions in the pathway purine metabolism; AMP biosynthesis via de novo pathway; AMP from IMP: step 1/2. Component of the purine nucleotide cycle (PNC), which interconverts IMP and AMP to regulate the nucleotide levels in various tissues, and which contributes to glycolysis and ammoniagenesis. Catalyzes the first committed step in the biosynthesis of AMP from IMP. This chain is Adenylosuccinate synthetase isozyme 1 A (adss1a), found in Salmo salar (Atlantic salmon).